The chain runs to 502 residues: MCPISTALFVIAAILALIYVFLTWNFSYWKKRGIPTAKSWPFVGSFPSVFTQKRNVVYDIDEIYEQYKNTDSIVGVFQTRIPQLMVTTPEYAHKIYVSDFRSFHDNEMAKFTDSKTDPILANNPFVLTGEAWKERRAEVTPGLSANRVKAAYPVSLRVCKKFVEYIRRQSLMAPAQGLNAKDLCLCYTTEVISDCVLGISAQSFTDNPTPMVGMTKRVFEQSFGFIFYTVVANLWPPITKFYSVSLFAKDVAAFFYDLMQKCIQVRRESPAAQQRDDFLNYMLQLQEKKGLNAAELTSHTMTFLTDGFETTAQVLTHTLLFLARNPKEQMKLREEIGTAELTFEQISELPFTEACIHETLRIFSPVLAARKVVTEPCELTNKNGVSVKLRPGDVVIIPVNALHHDPQYYEEPQSFKPERFLNINGGAKKYRDQGLFFGFGDGPRICPGMRFSLTQIKAALVEIVRNFDIKVNPKTRKDNEIDDTYFMPALKGGVWLDFVERN.

Cys446 is a binding site for heme.

This sequence belongs to the cytochrome P450 family. The cofactor is heme.

The protein resides in the endoplasmic reticulum membrane. The protein localises to the microsome membrane. May be involved in the metabolism of insect hormones and in the breakdown of synthetic insecticides. The chain is Probable cytochrome P450 28d1 (Cyp28d1) from Drosophila melanogaster (Fruit fly).